Here is a 448-residue protein sequence, read N- to C-terminus: Argininosuccinate synthase (448 aa).

ATP contacts are provided by residues 17–25 (AFSGGLDTS) and Ala-43. Tyr-99 contacts L-citrulline. The ATP site is built by Gly-129 and Thr-131. L-aspartate-binding residues include Thr-131, Asn-135, and Asp-136. Asn-135 provides a ligand contact to L-citrulline. Asp-136 serves as a coordination point for ATP. 2 residues coordinate L-citrulline: Arg-139 and Ser-192. Residue Asp-194 coordinates ATP. L-citrulline is bound by residues Thr-201, Glu-203, and Glu-280.

It belongs to the argininosuccinate synthase family. Type 2 subfamily. In terms of assembly, homotetramer.

The protein resides in the cytoplasm. It catalyses the reaction L-citrulline + L-aspartate + ATP = 2-(N(omega)-L-arginino)succinate + AMP + diphosphate + H(+). The protein operates within amino-acid biosynthesis; L-arginine biosynthesis; L-arginine from L-ornithine and carbamoyl phosphate: step 2/3. This chain is Argininosuccinate synthase, found in Bradyrhizobium sp. (strain ORS 278).